The sequence spans 130 residues: Small ribosomal subunit protein uS11 (130 aa).

The protein belongs to the universal ribosomal protein uS11 family. Part of the 30S ribosomal subunit. Interacts with proteins S7 and S18. Binds to IF-3.

Functionally, located on the platform of the 30S subunit, it bridges several disparate RNA helices of the 16S rRNA. Forms part of the Shine-Dalgarno cleft in the 70S ribosome. The polypeptide is Small ribosomal subunit protein uS11 (Campylobacter hominis (strain ATCC BAA-381 / DSM 21671 / CCUG 45161 / LMG 19568 / NCTC 13146 / CH001A)).